The chain runs to 439 residues: Protein translocase subunit SecY (439 aa).

The next 10 helical transmembrane spans lie at 23–43 (IASV…PIPG), 77–97 (IFAL…LLTL), 125–145 (LVLA…ISGM), 154–174 (FYFY…LMWL), 187–207 (ISII…VHTI), 217–237 (ILLF…VVFI), 274–294 (VIPA…ISWF), 317–337 (YLIL…GLVF), 369–389 (IMIR…LIPE), and 397–417 (VPFY…MDFI).

It belongs to the SecY/SEC61-alpha family. Component of the Sec protein translocase complex. Heterotrimer consisting of SecY, SecE and SecG subunits. The heterotrimers can form oligomers, although 1 heterotrimer is thought to be able to translocate proteins. Interacts with the ribosome. Interacts with SecDF, and other proteins may be involved. Interacts with SecA.

Its subcellular location is the cell membrane. The central subunit of the protein translocation channel SecYEG. Consists of two halves formed by TMs 1-5 and 6-10. These two domains form a lateral gate at the front which open onto the bilayer between TMs 2 and 7, and are clamped together by SecE at the back. The channel is closed by both a pore ring composed of hydrophobic SecY resides and a short helix (helix 2A) on the extracellular side of the membrane which forms a plug. The plug probably moves laterally to allow the channel to open. The ring and the pore may move independently. This is Protein translocase subunit SecY from Buchnera aphidicola subsp. Schizaphis graminum (strain Sg).